The sequence spans 222 residues: 7-cyano-7-deazaguanine synthase (222 aa).

Residue 14-24 (FSGGQDSTTCL) coordinates ATP. 4 residues coordinate Zn(2+): Cys190, Cys199, Cys202, and Cys205.

Belongs to the QueC family. In terms of assembly, homodimer. Zn(2+) serves as cofactor.

It catalyses the reaction 7-carboxy-7-deazaguanine + NH4(+) + ATP = 7-cyano-7-deazaguanine + ADP + phosphate + H2O + H(+). Its pathway is purine metabolism; 7-cyano-7-deazaguanine biosynthesis. Catalyzes the ATP-dependent conversion of 7-carboxy-7-deazaguanine (CDG) to 7-cyano-7-deazaguanine (preQ(0)). The protein is 7-cyano-7-deazaguanine synthase of Staphylococcus aureus (strain Mu3 / ATCC 700698).